We begin with the raw amino-acid sequence, 99 residues long: Aspartyl/glutamyl-tRNA(Asn/Gln) amidotransferase subunit C (99 aa).

The protein belongs to the GatC family. In terms of assembly, heterotrimer of A, B and C subunits.

It carries out the reaction L-glutamyl-tRNA(Gln) + L-glutamine + ATP + H2O = L-glutaminyl-tRNA(Gln) + L-glutamate + ADP + phosphate + H(+). The enzyme catalyses L-aspartyl-tRNA(Asn) + L-glutamine + ATP + H2O = L-asparaginyl-tRNA(Asn) + L-glutamate + ADP + phosphate + 2 H(+). Functionally, allows the formation of correctly charged Asn-tRNA(Asn) or Gln-tRNA(Gln) through the transamidation of misacylated Asp-tRNA(Asn) or Glu-tRNA(Gln) in organisms which lack either or both of asparaginyl-tRNA or glutaminyl-tRNA synthetases. The reaction takes place in the presence of glutamine and ATP through an activated phospho-Asp-tRNA(Asn) or phospho-Glu-tRNA(Gln). The sequence is that of Aspartyl/glutamyl-tRNA(Asn/Gln) amidotransferase subunit C from Burkholderia mallei (strain NCTC 10247).